A 346-amino-acid polypeptide reads, in one-letter code: Cyclin-dependent kinase 7 (346 aa).

Ala2 is modified (N-acetylalanine). Ser7 is subject to Phosphoserine. Residues 12-295 (YEKLDFLGEG…ATQALKMKYF (284 aa)) enclose the Protein kinase domain. Residues 18–26 (LGEGQFATV) and Lys41 contribute to the ATP site. Asp137 acts as the Proton acceptor in catalysis. The residue at position 164 (Ser164) is a Phosphoserine; by CDK1 and CDK2. Thr170 carries the post-translational modification Phosphothreonine; by CDK2. Ser321 is modified (phosphoserine).

Belongs to the protein kinase superfamily. CMGC Ser/Thr protein kinase family. CDC2/CDKX subfamily. Associates primarily with cyclin-H (CCNH) and MAT1 to form the CAK complex. CAK can further associate with the core-TFIIH to form the TFIIH basal transcription factor; this complex is sensitive to UV light. The CAK complex binds to p53/TP53 in response to DNA damage. Interacts with CDK2, SF1/NR5A1, PUF60 and PRKCI. Interacts with HINT1. Post-translationally, phosphorylation of Ser-164 during mitosis inactivates the enzyme. Phosphorylation of Thr-170 is required for activity. Phosphorylated at Ser-164 and Thr-170 by CDK2. In terms of tissue distribution, ubiquitous.

The protein localises to the nucleus. Its subcellular location is the cytoplasm. The protein resides in the perinuclear region. It carries out the reaction L-seryl-[protein] + ATP = O-phospho-L-seryl-[protein] + ADP + H(+). It catalyses the reaction L-threonyl-[protein] + ATP = O-phospho-L-threonyl-[protein] + ADP + H(+). The catalysed reaction is [DNA-directed RNA polymerase] + ATP = phospho-[DNA-directed RNA polymerase] + ADP + H(+). Its activity is regulated as follows. Inactivated by phosphorylation. Repressed by roscovitine (seliciclib, CYC202), R547 (Ro-4584820) and SNS-032 (BMS-387032). The association of p53/TP53 to the CAK complex in response to DNA damage reduces kinase activity toward CDK2 and RNA polymerase II repetitive C-terminal domain (CTD), thus stopping cell cycle progression. The inactivation by roscovitine promotes caspase-mediated apoptosis in leukemic cells. Specifically inactivated by THZ1. Its function is as follows. Serine/threonine kinase involved in cell cycle control and in RNA polymerase II-mediated RNA transcription. Cyclin-dependent kinases (CDKs) are activated by the binding to a cyclin and mediate the progression through the cell cycle. Each different complex controls a specific transition between 2 subsequent phases in the cell cycle. Required for both activation and complex formation of CDK1/cyclin-B during G2-M transition, and for activation of CDK2/cyclins during G1-S transition (but not complex formation). CDK7 is the catalytic subunit of the CDK-activating kinase (CAK) complex. Phosphorylates SPT5/SUPT5H, SF1/NR5A1, POLR2A, p53/TP53, CDK1, CDK2, CDK4, CDK6 and CDK11B/CDK11. Initiates transcription by RNA polymerase II by mediating phosphorylation of POLR2A at 'Ser-5' of the repetitive C-terminal domain (CTD) when POLR2A is in complex with DNA, promoting dissociation from DNA and initiation. CAK activates the cyclin-associated kinases CDK1, CDK2, CDK4 and CDK6 by threonine phosphorylation, thus regulating cell cycle progression. CAK complexed to the core-TFIIH basal transcription factor activates RNA polymerase II by serine phosphorylation of the CTD of POLR2A, allowing its escape from the promoter and elongation of the transcripts. Its expression and activity are constant throughout the cell cycle. Upon DNA damage, triggers p53/TP53 activation by phosphorylation, but is inactivated in turn by p53/TP53; this feedback loop may lead to an arrest of the cell cycle and of the transcription, helping in cell recovery, or to apoptosis. Required for DNA-bound peptides-mediated transcription and cellular growth inhibition. This is Cyclin-dependent kinase 7 (CDK7) from Homo sapiens (Human).